Reading from the N-terminus, the 185-residue chain is uncharacterized protein (185 aa).

The next 5 membrane-spanning stretches (helical) occupy residues 4–24 (TYLT…SLSI), 54–74 (LALF…LKLI), 98–118 (LRMG…LLQN), 119–139 (VIWI…FTVY), and 153–173 (FILL…FIFI).

It localises to the cell membrane. This is an uncharacterized protein from Bacillus subtilis (strain 168).